We begin with the raw amino-acid sequence, 217 residues long: RNA chaperone ProQ (217 aa).

Positions 105–166 are disordered; the sequence is EAKARVQAQR…PREEQHTPVS (62 aa). Over residues 121–131 the composition is skewed to basic residues; the sequence is KRERKPRPTTP. Basic and acidic residues predominate over residues 132–162; it reads RRKEGAERKPRAQKPVEKAPKTVKAPREEQH.

This sequence belongs to the ProQ family.

It is found in the cytoplasm. Its function is as follows. RNA chaperone with significant RNA binding, RNA strand exchange and RNA duplexing activities. May regulate ProP activity through an RNA-based, post-transcriptional mechanism. This is RNA chaperone ProQ from Escherichia coli O8 (strain IAI1).